A 78-amino-acid chain; its full sequence is Translational regulator CsrA (78 aa).

This sequence belongs to the CsrA/RsmA family. Homodimer; the beta-strands of each monomer intercalate to form a hydrophobic core, while the alpha-helices form wings that extend away from the core.

The protein resides in the cytoplasm. In terms of biological role, a translational regulator that binds mRNA to regulate translation initiation and/or mRNA stability. Usually binds in the 5'-UTR at or near the Shine-Dalgarno sequence preventing ribosome-binding, thus repressing translation. Its main target seems to be the major flagellin gene, while its function is anatagonized by FliW. The polypeptide is Translational regulator CsrA (Borrelia recurrentis (strain A1)).